The chain runs to 22 residues: Superoxide dismutase [Cu-Zn] 2 (22 aa).

It belongs to the Cu-Zn superoxide dismutase family. As to quaternary structure, homodimer. Cu cation is required as a cofactor. It depends on Zn(2+) as a cofactor. As to expression, dominant isozyme in roots.

It localises to the cytoplasm. It carries out the reaction 2 superoxide + 2 H(+) = H2O2 + O2. Functionally, destroys radicals which are normally produced within the cells and which are toxic to biological systems. This Picea abies (Norway spruce) protein is Superoxide dismutase [Cu-Zn] 2.